Consider the following 399-residue polypeptide: Acetate kinase (399 aa).

Residue Asn7 participates in Mg(2+) binding. ATP is bound at residue Lys14. A substrate-binding site is contributed by Arg90. Asp147 functions as the Proton donor/acceptor in the catalytic mechanism. ATP contacts are provided by residues 207 to 211, 282 to 284, and 330 to 334; these read HLGNG, DFR, and GIGEN. Glu385 serves as a coordination point for Mg(2+).

This sequence belongs to the acetokinase family. Homodimer. The cofactor is Mg(2+). It depends on Mn(2+) as a cofactor.

Its subcellular location is the cytoplasm. The enzyme catalyses acetate + ATP = acetyl phosphate + ADP. It functions in the pathway metabolic intermediate biosynthesis; acetyl-CoA biosynthesis; acetyl-CoA from acetate: step 1/2. Catalyzes the formation of acetyl phosphate from acetate and ATP. Can also catalyze the reverse reaction. This is Acetate kinase from Caldicellulosiruptor bescii (strain ATCC BAA-1888 / DSM 6725 / KCTC 15123 / Z-1320) (Anaerocellum thermophilum).